An 870-amino-acid polypeptide reads, in one-letter code: Leucine--tRNA ligase (870 aa).

Positions 43-53 match the 'HIGH' region motif; sequence PYPSGRLHMGH. Residues 626-630 carry the 'KMSKS' region motif; that stretch reads KMSKS. Residue lysine 629 participates in ATP binding.

The protein belongs to the class-I aminoacyl-tRNA synthetase family.

It is found in the cytoplasm. The catalysed reaction is tRNA(Leu) + L-leucine + ATP = L-leucyl-tRNA(Leu) + AMP + diphosphate. In Pseudoalteromonas atlantica (strain T6c / ATCC BAA-1087), this protein is Leucine--tRNA ligase.